The primary structure comprises 551 residues: Probable 4-coumarate--CoA ligase 1 (551 aa).

The ATP site is built by S205, S206, G207, T208, T209, and K213. Y253 serves as a coordination point for (E)-4-coumaroyl-AMP. K274 serves as a coordination point for CoA. The SBD1 stretch occupies residues 276 to 346 (EPVRFLELIQ…RFKGRLVIKQ (71 aa)). (E)-4-coumaroyl-AMP-binding residues include A323, Q346, G347, and T351. ATP is bound by residues Q346, G347, T351, D430, and R445. Residues 347-409 (GYGATELSPA…IKGPNVMLGY (63 aa)) form an SBD2 region. The (E)-4-coumaroyl-AMP site is built by K447 and K451. Positions 453 and 454 each coordinate CoA. K537 serves as a coordination point for ATP.

The protein belongs to the ATP-dependent AMP-binding enzyme family. It depends on Mg(2+) as a cofactor.

The catalysed reaction is (E)-4-coumarate + ATP + CoA = (E)-4-coumaroyl-CoA + AMP + diphosphate. The enzyme catalyses (E)-4-coumarate + ATP + H(+) = (E)-4-coumaroyl-AMP + diphosphate. It catalyses the reaction (E)-4-coumaroyl-AMP + CoA = (E)-4-coumaroyl-CoA + AMP + H(+). The protein operates within phytoalexin biosynthesis; 3,4',5-trihydroxystilbene biosynthesis; 3,4',5-trihydroxystilbene from trans-4-coumarate: step 1/2. Its function is as follows. Carboxylate--CoA ligase that may use 4-coumarate as substrate. Follows a two-step reaction mechanism, wherein the carboxylate substrate first undergoes adenylation by ATP, followed by a thioesterification in the presence of CoA to yield the final CoA thioester. The chain is Probable 4-coumarate--CoA ligase 1 (4cl1) from Dictyostelium discoideum (Social amoeba).